A 395-amino-acid polypeptide reads, in one-letter code: RNA polymerase II elongation factor ELL3 (395 aa).

Disordered stretches follow at residues 124-149 (SSLQ…DYPE), 163-182 (VPDP…SREH), 194-218 (LPNR…KRPA), and 233-279 (LAPS…SLSP). A compositionally biased stretch (basic and acidic residues) spans 130-140 (NRTEDARDRES). Residues 168-177 (ASSQGQSLPG) show a composition bias toward polar residues. The span at 246-258 (LQEEDWEQEDKDE) shows a compositional bias: acidic residues. A compositionally biased stretch (polar residues) spans 268–277 (PSVQADSESL). Residues 283–393 (PDYLLQYRAI…LILEFEEKNR (111 aa)) enclose the OCEL domain.

The protein belongs to the ELL/occludin family. Interacts with AFF4. Component of the super elongation complex (SEC), at least composed of EAF1, EAF2, CDK9, MLLT3/AF9, AFF (AFF1 or AFF4), the P-TEFb complex and ELL (ELL, ELL2 or ELL3). Component of the little elongation complex (LEC), at least composed of ELL (ELL, ELL2 or ELL3), ZC3H8, ICE1 and ICE2.

It is found in the nucleus. Functionally, enhancer-binding elongation factor that specifically binds enhancers in embryonic stem cells (ES cells), marks them, and is required for their future activation during stem cell specification. Elongation factor component of the super elongation complex (SEC), a complex required to increase the catalytic rate of RNA polymerase II transcription by suppressing transient pausing by the polymerase at multiple sites along the DNA. Component of the little elongation complex (LEC), a complex required to regulate small nuclear RNA (snRNA) gene transcription by RNA polymerase II and III. Does not only bind to enhancer regions of active genes, but also marks the enhancers that are in a poised or inactive state in ES cells and is required for establishing proper RNA polymerase II occupancy at developmentally regulated genes in a cohesin-dependent manner. Probably required for priming developmentally regulated genes for later recruitment of the super elongation complex (SEC), for transcriptional activation during differentiation. Required for recruitment of P-TEFb within SEC during differentiation. Probably preloaded on germ cell chromatin, suggesting that it may prime gene activation by marking enhancers as early as in the germ cells. Promoting epithelial-mesenchymal transition (EMT). The sequence is that of RNA polymerase II elongation factor ELL3 (ELL3) from Bos taurus (Bovine).